The following is a 193-amino-acid chain: Bcl-2-like protein 2 (193 aa).

A2 carries the N-acetylalanine modification. Residues 9–29 (DTRALVADFVGYKLRQKGYVC) carry the BH4 motif. A BH1 motif is present at residues 85 to 104 (ELFQGGPNWGRLVAFFVFGA). The short motif at 136–151 (DWIHSSGGWAEFTALY) is the BH2 element. The residue at position 177 (A177) is a Phosphoserine.

The protein belongs to the Bcl-2 family. In terms of assembly, interacts with HIF3A (via C-terminus domain). Interacts with BOP. In terms of tissue distribution, expressed (at protein level) in a wide range of tissues with highest levels in brain, spinal cord, testis, pancreas, heart, spleen and mammary glands. Moderate levels found in thymus, ovary and small intestine. Not detected in salivary gland, muscle or liver. Also expressed in cell lines of myeloid, fibroblast and epithelial origin. Not detected in most lymphoid cell lines.

Its subcellular location is the mitochondrion membrane. Promotes cell survival. Blocks dexamethasone-induced apoptosis. Mediates survival of postmitotic Sertoli cells by suppressing death-promoting activity of BAX. This Homo sapiens (Human) protein is Bcl-2-like protein 2 (BCL2L2).